Here is a 338-residue protein sequence, read N- to C-terminus: Holliday junction branch migration complex subunit RuvB (338 aa).

Positions 4-187 (ADRLIHAEPQ…FGIPLRLEFY (184 aa)) are large ATPase domain (RuvB-L). ATP-binding positions include Arg27, Gly68, Lys71, Thr72, Thr73, 134 to 136 (EDY), Arg177, Tyr187, and Arg224. Thr72 provides a ligand contact to Mg(2+). The segment at 188 to 258 (NVKDLSSIVT…VAELALDMLD (71 aa)) is small ATPAse domain (RuvB-S). Residues 261-338 (SEGFDYMDRK…RHFDIIQPEK (78 aa)) are head domain (RuvB-H). The DNA site is built by Arg297, Arg316, and Arg321.

The protein belongs to the RuvB family. In terms of assembly, homohexamer. Forms an RuvA(8)-RuvB(12)-Holliday junction (HJ) complex. HJ DNA is sandwiched between 2 RuvA tetramers; dsDNA enters through RuvA and exits via RuvB. An RuvB hexamer assembles on each DNA strand where it exits the tetramer. Each RuvB hexamer is contacted by two RuvA subunits (via domain III) on 2 adjacent RuvB subunits; this complex drives branch migration. In the full resolvosome a probable DNA-RuvA(4)-RuvB(12)-RuvC(2) complex forms which resolves the HJ.

The protein localises to the cytoplasm. It carries out the reaction ATP + H2O = ADP + phosphate + H(+). Functionally, the RuvA-RuvB-RuvC complex processes Holliday junction (HJ) DNA during genetic recombination and DNA repair, while the RuvA-RuvB complex plays an important role in the rescue of blocked DNA replication forks via replication fork reversal (RFR). RuvA specifically binds to HJ cruciform DNA, conferring on it an open structure. The RuvB hexamer acts as an ATP-dependent pump, pulling dsDNA into and through the RuvAB complex. RuvB forms 2 homohexamers on either side of HJ DNA bound by 1 or 2 RuvA tetramers; 4 subunits per hexamer contact DNA at a time. Coordinated motions by a converter formed by DNA-disengaged RuvB subunits stimulates ATP hydrolysis and nucleotide exchange. Immobilization of the converter enables RuvB to convert the ATP-contained energy into a lever motion, pulling 2 nucleotides of DNA out of the RuvA tetramer per ATP hydrolyzed, thus driving DNA branch migration. The RuvB motors rotate together with the DNA substrate, which together with the progressing nucleotide cycle form the mechanistic basis for DNA recombination by continuous HJ branch migration. Branch migration allows RuvC to scan DNA until it finds its consensus sequence, where it cleaves and resolves cruciform DNA. In Shewanella woodyi (strain ATCC 51908 / MS32), this protein is Holliday junction branch migration complex subunit RuvB.